A 564-amino-acid polypeptide reads, in one-letter code: Potassium-transporting ATPase potassium-binding subunit (564 aa).

10 helical membrane passes run 4–24 (YDYWLILAFFAVVLLPAPFLG), 67–87 (TLALLAFNLAGFLLLFAILLF), 135–155 (VGLTVQNFVSAATGLAVLVAL), 179–199 (LYGLLPLCLLLALYLVWQGVP), 258–278 (FEVASIILIPVALVFTFGHYV), 286–306 (AIIGCMLALFIIGGATSLWAE), 382–402 (AGLYGMLLNVLIAVFLAGLMI), 420–440 (LLVVTLLVMPVGVLVLGAIAA), 487–507 (LMLGLGMLIGRFGYILPVLAL), and 528–548 (GPLFVTLLTVTILLLGGLTFL).

The protein belongs to the KdpA family. In terms of assembly, the system is composed of three essential subunits: KdpA, KdpB and KdpC.

Its subcellular location is the cell inner membrane. Its function is as follows. Part of the high-affinity ATP-driven potassium transport (or Kdp) system, which catalyzes the hydrolysis of ATP coupled with the electrogenic transport of potassium into the cytoplasm. This subunit binds the periplasmic potassium ions and delivers the ions to the membrane domain of KdpB through an intramembrane tunnel. This chain is Potassium-transporting ATPase potassium-binding subunit, found in Pseudomonas fluorescens (strain Pf0-1).